Reading from the N-terminus, the 213-residue chain is MTSLAELRKNYSLGSLDVADIDRNPFRQFDTWFQQAVDAKLPEPNTMTLATVDSRGRPSARIVLIKGVDERGFVFFTNYESRKGRELAANPYASLLFYWIELERQVRVEGRIVKTSAEESDAYFASRPLGSRIGAWASNQSQLIESRSQLETREREISLQYGDQPPRPPHWGGYRLVPEAIEFWQGRPSRLHDRLLYTRSDEHSDWQISRLSP.

Substrate contacts are provided by residues 8–11 and Lys66; that span reads RKNY. FMN-binding positions include 61–66, 76–77, Arg82, Lys83, and Gln105; these read RIVLIK and FT. Substrate-binding residues include Tyr123, Arg127, and Ser131. Residues 140-141 and Trp184 each bind FMN; that span reads QS. 190–192 lines the substrate pocket; sequence RLH. Position 194 (Arg194) interacts with FMN.

This sequence belongs to the pyridoxamine 5'-phosphate oxidase family. As to quaternary structure, homodimer. It depends on FMN as a cofactor.

The enzyme catalyses pyridoxamine 5'-phosphate + O2 + H2O = pyridoxal 5'-phosphate + H2O2 + NH4(+). It catalyses the reaction pyridoxine 5'-phosphate + O2 = pyridoxal 5'-phosphate + H2O2. Its pathway is cofactor metabolism; pyridoxal 5'-phosphate salvage; pyridoxal 5'-phosphate from pyridoxamine 5'-phosphate: step 1/1. It functions in the pathway cofactor metabolism; pyridoxal 5'-phosphate salvage; pyridoxal 5'-phosphate from pyridoxine 5'-phosphate: step 1/1. Catalyzes the oxidation of either pyridoxine 5'-phosphate (PNP) or pyridoxamine 5'-phosphate (PMP) into pyridoxal 5'-phosphate (PLP). This is Pyridoxine/pyridoxamine 5'-phosphate oxidase from Paraburkholderia phytofirmans (strain DSM 17436 / LMG 22146 / PsJN) (Burkholderia phytofirmans).